The chain runs to 431 residues: Glutamate-1-semialdehyde 2,1-aminomutase (431 aa).

K269 bears the N6-(pyridoxal phosphate)lysine mark.

Belongs to the class-III pyridoxal-phosphate-dependent aminotransferase family. HemL subfamily. As to quaternary structure, homodimer. The cofactor is pyridoxal 5'-phosphate.

The protein localises to the cytoplasm. The catalysed reaction is (S)-4-amino-5-oxopentanoate = 5-aminolevulinate. It functions in the pathway porphyrin-containing compound metabolism; protoporphyrin-IX biosynthesis; 5-aminolevulinate from L-glutamyl-tRNA(Glu): step 2/2. The protein operates within porphyrin-containing compound metabolism; chlorophyll biosynthesis. In Chlorobium phaeobacteroides (strain DSM 266 / SMG 266 / 2430), this protein is Glutamate-1-semialdehyde 2,1-aminomutase.